The sequence spans 438 residues: Adenosylhomocysteinase (438 aa).

Residues Thr61, Asp137, and Glu162 each coordinate substrate. 163–165 contacts NAD(+); sequence TTT. The substrate site is built by Lys192 and Asp196. Residues Asn197, 226–231, Glu249, Asn284, 305–307, and Asn352 contribute to the NAD(+) site; these read GYGDVG and IGH.

The protein belongs to the adenosylhomocysteinase family. NAD(+) is required as a cofactor.

The protein resides in the cytoplasm. It carries out the reaction S-adenosyl-L-homocysteine + H2O = L-homocysteine + adenosine. Its pathway is amino-acid biosynthesis; L-homocysteine biosynthesis; L-homocysteine from S-adenosyl-L-homocysteine: step 1/1. In terms of biological role, may play a key role in the regulation of the intracellular concentration of adenosylhomocysteine. The chain is Adenosylhomocysteinase from Christiangramia forsetii (strain DSM 17595 / CGMCC 1.15422 / KT0803) (Gramella forsetii).